The sequence spans 177 residues: MEIRGTTILAVRHKGHVALAGDGQVTLGQSVVMKHTAKKVRRMYKNQVIAGFAGTTADAFTLFERFDNYLEETNGNLVRAAVELAKEWRKDKYLRRLEAMLLVVDKDHTFVLSGTGDVIEPDDGIAAIGSGGLYAVAAARALVAHSELSAAEIARESMRITAEICVFTNLNLTLETL.

Thr6 is an active-site residue. Residues Ala162, Cys165, and Thr168 each contribute to the Na(+) site.

Belongs to the peptidase T1B family. HslV subfamily. As to quaternary structure, a double ring-shaped homohexamer of HslV is capped on each side by a ring-shaped HslU homohexamer. The assembly of the HslU/HslV complex is dependent on binding of ATP.

It is found in the cytoplasm. It carries out the reaction ATP-dependent cleavage of peptide bonds with broad specificity.. With respect to regulation, allosterically activated by HslU binding. In terms of biological role, protease subunit of a proteasome-like degradation complex believed to be a general protein degrading machinery. The sequence is that of ATP-dependent protease subunit HslV from Lawsonia intracellularis (strain PHE/MN1-00).